The chain runs to 114 residues: UPF0060 membrane protein GDI3492/Gdia_2889 (114 aa).

The next 4 membrane-spanning stretches (helical) occupy residues 8-28 (FAVY…WWCW), 35-55 (AWVL…LTLV), 64-84 (FAAY…LVEG), and 92-112 (AAGV…GRGA).

Belongs to the UPF0060 family.

Its subcellular location is the cell inner membrane. This Gluconacetobacter diazotrophicus (strain ATCC 49037 / DSM 5601 / CCUG 37298 / CIP 103539 / LMG 7603 / PAl5) protein is UPF0060 membrane protein GDI3492/Gdia_2889.